A 660-amino-acid polypeptide reads, in one-letter code: Bifunctional polymyxin resistance protein ArnA (660 aa).

The interval 1-304 (MKTVVFAYHD…TLGLVQGSRL (304 aa)) is formyltransferase ArnAFT. 86 to 88 (HLI) contributes to the (6R)-10-formyltetrahydrofolate binding site. The active-site Proton donor; for formyltransferase activity is the His104. (6R)-10-formyltetrahydrofolate is bound by residues Arg114 and 136–140 (VKRAD). The segment at 314–660 (RRTRVLILGV…RTVDLTDKPS (347 aa)) is dehydrogenase ArnADH. NAD(+)-binding positions include Asp347 and 368 to 369 (DI). UDP-alpha-D-glucuronate is bound by residues Ala393, Tyr398, and 432-433 (TS). The active-site Proton acceptor; for decarboxylase activity is Glu434. UDP-alpha-D-glucuronate-binding positions include Arg460, Asn492, 526 to 535 (KLIDGGKQKR), and Tyr613. Arg619 functions as the Proton donor; for decarboxylase activity in the catalytic mechanism.

It in the N-terminal section; belongs to the Fmt family. UDP-L-Ara4N formyltransferase subfamily. The protein in the C-terminal section; belongs to the NAD(P)-dependent epimerase/dehydratase family. UDP-glucuronic acid decarboxylase subfamily. In terms of assembly, homohexamer, formed by a dimer of trimers.

It catalyses the reaction UDP-alpha-D-glucuronate + NAD(+) = UDP-beta-L-threo-pentopyranos-4-ulose + CO2 + NADH. The catalysed reaction is UDP-4-amino-4-deoxy-beta-L-arabinose + (6R)-10-formyltetrahydrofolate = UDP-4-deoxy-4-formamido-beta-L-arabinose + (6S)-5,6,7,8-tetrahydrofolate + H(+). The protein operates within nucleotide-sugar biosynthesis; UDP-4-deoxy-4-formamido-beta-L-arabinose biosynthesis; UDP-4-deoxy-4-formamido-beta-L-arabinose from UDP-alpha-D-glucuronate: step 1/3. Its pathway is nucleotide-sugar biosynthesis; UDP-4-deoxy-4-formamido-beta-L-arabinose biosynthesis; UDP-4-deoxy-4-formamido-beta-L-arabinose from UDP-alpha-D-glucuronate: step 3/3. It participates in bacterial outer membrane biogenesis; lipopolysaccharide biosynthesis. Its function is as follows. Bifunctional enzyme that catalyzes the oxidative decarboxylation of UDP-glucuronic acid (UDP-GlcUA) to UDP-4-keto-arabinose (UDP-Ara4O) and the addition of a formyl group to UDP-4-amino-4-deoxy-L-arabinose (UDP-L-Ara4N) to form UDP-L-4-formamido-arabinose (UDP-L-Ara4FN). The modified arabinose is attached to lipid A and is required for resistance to polymyxin and cationic antimicrobial peptides. This is Bifunctional polymyxin resistance protein ArnA from Escherichia coli (strain K12 / MC4100 / BW2952).